Consider the following 125-residue polypeptide: Large ribosomal subunit protein eL31 (125 aa).

Methionine 1 carries the post-translational modification N-acetylmethionine. Position 15 is a phosphoserine (serine 15). 2 positions are modified to N6-succinyllysine: lysine 55 and lysine 70. Lysine 75 carries the post-translational modification N6-acetyllysine; alternate. At lysine 75 the chain carries N6-succinyllysine; alternate. Phosphoserine is present on serine 98.

The protein belongs to the eukaryotic ribosomal protein eL31 family. Component of the large ribosomal subunit.

It localises to the cytoplasm. Component of the large ribosomal subunit. The ribosome is a large ribonucleoprotein complex responsible for the synthesis of proteins in the cell. The sequence is that of Large ribosomal subunit protein eL31 (RPL31) from Oryctolagus cuniculus (Rabbit).